A 179-amino-acid polypeptide reads, in one-letter code: Large ribosomal subunit protein uL5 (179 aa).

It belongs to the universal ribosomal protein uL5 family. In terms of assembly, part of the 50S ribosomal subunit; part of the 5S rRNA/L5/L18/L25 subcomplex. Contacts the 5S rRNA and the P site tRNA. Forms a bridge to the 30S subunit in the 70S ribosome.

This is one of the proteins that bind and probably mediate the attachment of the 5S RNA into the large ribosomal subunit, where it forms part of the central protuberance. In the 70S ribosome it contacts protein S13 of the 30S subunit (bridge B1b), connecting the 2 subunits; this bridge is implicated in subunit movement. Contacts the P site tRNA; the 5S rRNA and some of its associated proteins might help stabilize positioning of ribosome-bound tRNAs. The protein is Large ribosomal subunit protein uL5 of Burkholderia vietnamiensis (strain G4 / LMG 22486) (Burkholderia cepacia (strain R1808)).